We begin with the raw amino-acid sequence, 295 residues long: ATP synthase gamma chain (295 aa).

The protein belongs to the ATPase gamma chain family. F-type ATPases have 2 components, CF(1) - the catalytic core - and CF(0) - the membrane proton channel. CF(1) has five subunits: alpha(3), beta(3), gamma(1), delta(1), epsilon(1). CF(0) has three main subunits: a, b and c.

It is found in the cell inner membrane. Functionally, produces ATP from ADP in the presence of a proton gradient across the membrane. The gamma chain is believed to be important in regulating ATPase activity and the flow of protons through the CF(0) complex. This Campylobacter concisus (strain 13826) protein is ATP synthase gamma chain.